We begin with the raw amino-acid sequence, 299 residues long: 4-diphosphocytidyl-2-C-methyl-D-erythritol kinase (299 aa).

Lys-17 is an active-site residue. An ATP-binding site is contributed by 99–109 (PLASGLGGGSS). Asp-142 is a catalytic residue.

The protein belongs to the GHMP kinase family. IspE subfamily.

It catalyses the reaction 4-CDP-2-C-methyl-D-erythritol + ATP = 4-CDP-2-C-methyl-D-erythritol 2-phosphate + ADP + H(+). The protein operates within isoprenoid biosynthesis; isopentenyl diphosphate biosynthesis via DXP pathway; isopentenyl diphosphate from 1-deoxy-D-xylulose 5-phosphate: step 3/6. Its function is as follows. Catalyzes the phosphorylation of the position 2 hydroxy group of 4-diphosphocytidyl-2C-methyl-D-erythritol. This chain is 4-diphosphocytidyl-2-C-methyl-D-erythritol kinase, found in Deinococcus radiodurans (strain ATCC 13939 / DSM 20539 / JCM 16871 / CCUG 27074 / LMG 4051 / NBRC 15346 / NCIMB 9279 / VKM B-1422 / R1).